Reading from the N-terminus, the 449-residue chain is Methylenetetrahydrofolate--tRNA-(uracil-5-)-methyltransferase TrmFO (449 aa).

10-15 contributes to the FAD binding site; sequence GGGLAG.

The protein belongs to the MnmG family. TrmFO subfamily. It depends on FAD as a cofactor.

It localises to the cytoplasm. It carries out the reaction uridine(54) in tRNA + (6R)-5,10-methylene-5,6,7,8-tetrahydrofolate + NADH + H(+) = 5-methyluridine(54) in tRNA + (6S)-5,6,7,8-tetrahydrofolate + NAD(+). The enzyme catalyses uridine(54) in tRNA + (6R)-5,10-methylene-5,6,7,8-tetrahydrofolate + NADPH + H(+) = 5-methyluridine(54) in tRNA + (6S)-5,6,7,8-tetrahydrofolate + NADP(+). Its function is as follows. Catalyzes the folate-dependent formation of 5-methyl-uridine at position 54 (M-5-U54) in all tRNAs. This Sphingopyxis alaskensis (strain DSM 13593 / LMG 18877 / RB2256) (Sphingomonas alaskensis) protein is Methylenetetrahydrofolate--tRNA-(uracil-5-)-methyltransferase TrmFO.